Consider the following 82-residue polypeptide: Zinc finger CCCH domain-containing protein 13 (82 aa).

C3H1-type zinc fingers lie at residues 9 to 37 (RPGE…HPKN) and 55 to 82 (RPGQ…DHFT).

The protein is Zinc finger CCCH domain-containing protein 13 of Arabidopsis thaliana (Mouse-ear cress).